Consider the following 281-residue polypeptide: Ribosomal RNA small subunit methyltransferase A (281 aa).

Residues Asn36, Leu38, Gly63, Glu84, Asp109, and Asn127 each contribute to the S-adenosyl-L-methionine site.

Belongs to the class I-like SAM-binding methyltransferase superfamily. rRNA adenine N(6)-methyltransferase family. RsmA subfamily.

It localises to the cytoplasm. The enzyme catalyses adenosine(1518)/adenosine(1519) in 16S rRNA + 4 S-adenosyl-L-methionine = N(6)-dimethyladenosine(1518)/N(6)-dimethyladenosine(1519) in 16S rRNA + 4 S-adenosyl-L-homocysteine + 4 H(+). Its function is as follows. Specifically dimethylates two adjacent adenosines (A1518 and A1519) in the loop of a conserved hairpin near the 3'-end of 16S rRNA in the 30S particle. May play a critical role in biogenesis of 30S subunits. The sequence is that of Ribosomal RNA small subunit methyltransferase A from Borreliella burgdorferi (strain ATCC 35210 / DSM 4680 / CIP 102532 / B31) (Borrelia burgdorferi).